We begin with the raw amino-acid sequence, 92 residues long: Probable Fe(2+)-trafficking protein (92 aa).

The protein belongs to the Fe(2+)-trafficking protein family.

Functionally, could be a mediator in iron transactions between iron acquisition and iron-requiring processes, such as synthesis and/or repair of Fe-S clusters in biosynthetic enzymes. This chain is Probable Fe(2+)-trafficking protein, found in Xanthomonas oryzae pv. oryzae (strain MAFF 311018).